Here is a 260-residue protein sequence, read N- to C-terminus: 3beta-hydroxysteroid dehydrogenase 2 (260 aa).

NAD(+) is bound by residues Asp43, 69-70 (DV), Asn96, Tyr163, and Lys167. Tyr163 acts as the Proton acceptor in catalysis.

It belongs to the short-chain dehydrogenases/reductases (SDR) family.

The enzyme catalyses 3-oxo-5beta-cholan-24-oate + NADH + H(+) = isolithocholate + NAD(+). It catalyses the reaction 12alpha-hydroxy-3-oxo-5beta-cholan-24-oate + NADH + H(+) = isodeoxycholate + NAD(+). The catalysed reaction is 12alpha-hydroxy-3-oxo-5beta-cholan-24-oate + NADPH + H(+) = isodeoxycholate + NADP(+). It carries out the reaction 7alpha,12alpha-dihydroxy-3-oxo-5beta-cholan-24-oate + NADH + H(+) = isocholate + NAD(+). The enzyme catalyses 3-oxochenodeoxycholate + NADH + H(+) = isochenodeoxycholate + NAD(+). In terms of biological role, involved in the modification of secondary bile acids into iso-bile acids (3beta-bile acids) via epimerization of the 3-OH group through a 3-oxo-intermediate. Catalyzes the reduction of 12-alpha-hydroxy-3-oxo-5-beta-cholan-24-oate (3-oxo-DCA) and 3-oxo-5-beta-cholan-24-oate (3-oxo-LCA) to yield isodeoxycholate (isoDCA) and isolithocholate (isoLCA), respectively. Is also able to catalyze the reduction of 3-dehydrocholate (3-oxo-CA or 7alpha,12alpha-dihydroxy-3-oxo-5beta-cholan-24-oate) and 7-alpha-hydroxy-3-oxo-5-beta-cholan-24-oate (3-oxo-CDCA), into isocholate (isoCA) and isochenodeoxycholate (isoCDCA), respectively. Accepts both NADH and NADPH as cosubstrates. The conversion of the abundant bile acid deoxycholate (DCA) into isoDCA by the gut bacterium E.lenta favors the growth of the keystone commensal genus Bacteroides, since isoDCA is less cytotoxic than its parent compound, DCA; iso-bile acids have thus a potential role in modulating gut community composition. The protein is 3beta-hydroxysteroid dehydrogenase 2 of Eggerthella lenta (strain ATCC 25559 / DSM 2243 / CCUG 17323 / JCM 9979 / KCTC 3265 / NCTC 11813 / VPI 0255 / 1899 B) (Eubacterium lentum).